The chain runs to 735 residues: MLKLFSAFRKDKIWDFDGGIHPPEMKTQSNGTPLRQVPLAPRFVIPLKQHIGAEGELCVSVGDRVLRGQALTRGRGRMLPVHAPTSGTVIAIAPHSTAHPSALAELSVIIDADGEDRWIEREGWSDYRAHSREALIERIHQYGVAGLGGAGFPTGVKLQGGGDKITTLIINAAECEPYITADDRLMQDCAAQIVEGIRILAHILQPREVLIGIEDNKPQAISMLRAVLADAHDISLRVIPTKYPSGGAKQLTQILTGKQVPHGGRSSDIGVLMQNVGTAYAVKRAVVDGEPITERVVTLTGEAVSRPGNVWARLGTPVRHLLNDAGFCPSADQMVIMGGPLMGFTLPWLDVPVVKITNCLLAPSVTEMGAPQEEKSCIRCSACADACPADLLPQQLYWFSKGQQHDKATAHHIADCIECGACAWVCPSNIPLVQYFRQEKAEINAIRLEEKRAAEAKARFEARQARLEREKAARLARHKSAAVQPAAKDQDAIAAALARVKEKQAQATQPVVIQAGSLPDNSAVIAAREARKAQARAKQAAHPVADSAISGGDPRKAAVEAAIARAKARKQEQQAGSEPAEPVDPRKAAVEAAIARAKARKQEQQAGSEPAEAVDPRKAAVEAAIARAKARKQEQQAGGEPAEAVDPRKAAVEAAIARAKARKQEQQTGSEPAEPVDPRKAAVEAAIARAKARKQEQQTGSEPAEPADPRKAAVAAAIARVQAKKAAQQQVVNED.

2 consecutive 4Fe-4S ferredoxin-type domains span residues 368–397 (MGAPQEEKSCIRCSACADACPADLLPQQLY) and 407–436 (KATAHHIADCIECGACAWVCPSNIPLVQYF). Residues C377, C380, C383, C387, C416, C419, C422, and C426 each coordinate [4Fe-4S] cluster. Residues 534–716 (QARAKQAAHP…ADPRKAAVAA (183 aa)) are disordered.

The protein belongs to the 4Fe4S bacterial-type ferredoxin family. RnfC subfamily. The complex is composed of six subunits: RsxA, RsxB, RsxC, RsxD, RsxE and RsxG. The cofactor is [4Fe-4S] cluster.

Its subcellular location is the cell inner membrane. Functionally, part of a membrane-bound complex that couples electron transfer with translocation of ions across the membrane. Required to maintain the reduced state of SoxR. The polypeptide is Ion-translocating oxidoreductase complex subunit C (Salmonella agona (strain SL483)).